A 428-amino-acid polypeptide reads, in one-letter code: 47 kDa outer membrane protein (428 aa).

Residues 1–25 form the signal peptide; that stretch reads MAKTSKFTQTLLASALAVVAGSASA.

This sequence belongs to the OmpP1/FadL family.

It is found in the cell outer membrane. The protein is 47 kDa outer membrane protein of Pasteurella multocida (strain Pm70).